The following is a 490-amino-acid chain: MESISMMGSPKSLSETFLPNGINGIKDARKVTVGVIGSGDFAKSLTIRLIRCGYHVVIGSRNPKFASEFFPHVVDVTHHEDALTKTNIIFVAIHREHYTSLWDLRHLLVGKILIDVSNNMRINQYPESNAEYLASLFPDSLIVKGFNVVSAWALQLGPKDASRQVYICSNNIQARQQVIELARQLNFIPIDLGSLSSAREIENLPLRLFTLWRGPVVVAISLATFFFLYSFVRDVIHPYARNQQSDFYKIPIEIVNKTLPIVAITLLSLVYLAGLLAAAYQLYYGTKYRRFPPWLETWLQCRKQLGLLSFFFAMVHVAYSLCLPMRRSERYLFLNMAYQQVHANIENSWNEEEVWRIEMYISFGIMSLGLLSLLAVTSIPSVSNALNWREFSFIQSTLGYVALLISTFHVLIYGWKRAFEEEYYRFYTPPNFVLALVLPSIVILGKIILFLPCISRKLKRIKKGWEKSQFLEEGMGGTIPHVSPERVTVM.

NADP(+) contacts are provided by residues 38 to 41, 60 to 61, 93 to 100, N118, and A151; these read SGDF, SR, and IHREHYTS. Residues W152 and D160 each coordinate FAD. Residues 208-228 form a helical membrane-spanning segment; sequence LFTLWRGPVVVAISLATFFFL. Y229 contributes to the Fe(3+) binding site. The chain crosses the membrane as a helical span at residues 259–279; sequence LPIVAITLLSLVYLAGLLAAA. Residues 259 to 407 form the Ferric oxidoreductase domain; sequence LPIVAITLLS…LGYVALLIST (149 aa). FAD contacts are provided by Q281 and R302. A run of 4 helical transmembrane segments spans residues 305–325, 359–379, 393–413, and 432–452; these read LGLLSFFFAMVHVAYSLCLPM, MYISFGIMSLGLLSLLAVTSI, FIQSTLGYVALLISTFHVLIY, and FVLALVLPSIVILGKIILFLP. H316 lines the heme b pocket. Y319 lines the Fe(3+) pocket. Positions 378 and 395 each coordinate FAD. H409 is a binding site for heme b. S483 carries the phosphoserine modification.

Belongs to the STEAP family. FAD is required as a cofactor. It depends on heme b as a cofactor. As to expression, expressed at high levels in prostate and at significantly lower levels in heart, brain, kidney, pancreas, and ovary.

The protein localises to the endosome membrane. Its subcellular location is the cell membrane. The enzyme catalyses 2 Fe(2+) + NADP(+) + H(+) = 2 Fe(3+) + NADPH. It carries out the reaction 2 Cu(+) + NADP(+) + H(+) = 2 Cu(2+) + NADPH. Functionally, integral membrane protein that functions as a NADPH-dependent ferric-chelate reductase, using NADPH from one side of the membrane to reduce a Fe(3+) chelate that is bound on the other side of the membrane. Mediates sequential transmembrane electron transfer from NADPH to FAD and onto heme, and finally to the Fe(3+) chelate. Can also reduce Cu(2+) to Cu(1+). This is Metalloreductase STEAP2 (STEAP2) from Homo sapiens (Human).